Reading from the N-terminus, the 347-residue chain is Heat-inducible transcription repressor HrcA (347 aa).

Belongs to the HrcA family.

Its function is as follows. Negative regulator of class I heat shock genes (grpE-dnaK-dnaJ and groELS operons). Prevents heat-shock induction of these operons. This Sorangium cellulosum (strain So ce56) (Polyangium cellulosum (strain So ce56)) protein is Heat-inducible transcription repressor HrcA.